We begin with the raw amino-acid sequence, 150 residues long: Large-conductance mechanosensitive channel (150 aa).

2 consecutive transmembrane segments (helical) span residues Val14–Phe34 and Gly81–Val101.

This sequence belongs to the MscL family. Homopentamer.

The protein localises to the cell membrane. Its function is as follows. Channel that opens in response to stretch forces in the membrane lipid bilayer. May participate in the regulation of osmotic pressure changes within the cell. This is Large-conductance mechanosensitive channel from Syntrophomonas wolfei subsp. wolfei (strain DSM 2245B / Goettingen).